A 298-amino-acid polypeptide reads, in one-letter code: Isochorismatase domain-containing protein 1 (298 aa).

Tyrosine 160 is modified (phosphotyrosine). Lysine 279 is subject to N6-succinyllysine.

Belongs to the isochorismatase family.

This is Isochorismatase domain-containing protein 1 (ISOC1) from Bos taurus (Bovine).